Here is a 240-residue protein sequence, read N- to C-terminus: MRRIRIYLAYDGGPFHGWQVQPGLATIQGILEEIVGGMEGKPVHVAGSGRTDAGVHALAQVAAFSIENPIPVENLRRAVNRLLPPAIRILCAEEVQADFHPRFDAVAKTYEYRMFRDEVCSPFEWPYVYHHPYPLDEARMATLARAFEGEHDFTPFAASDARDAEGKSKVRTIFSSTLDRTPQRLVYRVRGSGFLKHMVRNIVGTLIEAGRGNIADLNSLPARSGATAPAKGLFQVSVEY.

Residue Asp-52 is the Nucleophile of the active site. Tyr-110 serves as a coordination point for substrate.

This sequence belongs to the tRNA pseudouridine synthase TruA family. Homodimer.

The enzyme catalyses uridine(38/39/40) in tRNA = pseudouridine(38/39/40) in tRNA. Formation of pseudouridine at positions 38, 39 and 40 in the anticodon stem and loop of transfer RNAs. The chain is tRNA pseudouridine synthase A from Solibacter usitatus (strain Ellin6076).